A 237-amino-acid chain; its full sequence is MILGDDECNINEHRFLVALYTSRTLFCGGTLINQEWVLTAAHCNMEDIQIKLGMHSKKVPNEDEQKRVPKEKFFCLSSKNYTLWDKDIMLIRLDSPVKNSAHIAPLSLPSSPPSVGSVCRTMGWGRISSTKETYPDVPHCVNINLLEYEMCRAPYPEFELPATSRTLCAGILEGGKDTCVGDSGGPLICNGQFQGIASWGDDPCAQPHKPAAYTKVFDHLDWIENIIAGNTDASCPP.

Residue M1 is a propeptide. The Peptidase S1 domain maps to 2–228 (ILGDDECNIN…HLDWIENIIA (227 aa)). C27 and C43 are disulfide-bonded. H42 (charge relay system) is an active-site residue. N80 carries N-linked (GlcNAc...) asparagine glycosylation. The Charge relay system role is filled by D87. Disulfide bonds link C119/C189, C151/C168, and C179/C204. S183 acts as the Charge relay system in catalysis.

This sequence belongs to the peptidase S1 family. Snake venom subfamily. In terms of tissue distribution, expressed by the venom gland (at protein level). Expressed by the venom gland.

The protein resides in the secreted. With respect to regulation, the hydrolysis of TAMe (tosyl-arginine methyl ester) substrate is activated by Ca(2+), Fe(3+), Mg(2+) and Zn(2+), and inhibited by EDTA, PMSF and DTT. Functionally, thrombin-like enzyme that shows fibrinogenolytic activity against bovine fibrinogen alpha and beta chains, but not gamma chain. Hydrolyzes fibrin. Enhances ADP-induced human platelet aggregation. Has arginine esterase activity for TAMe (tosyl-arginine methyl ester) substrate. Reduces thrombin-induced thrombosis. Does not have hemorrhagic activity. Reduces the motility of human liver cancer HepG2 cells in a wound-healing assay. In Gloydius halys (Chinese water mocassin), this protein is Thrombin-like enzyme agkihpin-2.